A 351-amino-acid polypeptide reads, in one-letter code: MAAAPLKVCIVGSGNWGSAVAKIIGNNVKKLQKFASTVKMWVFEETVNGRKLTDIINNDHENVKYLPGHKLPENVVAISNLSEAVQDADLLVFVIPHQFIHRICDEITGRVPKKALGITLIKGIDEGPEGLKLISDIIREKMGIDISVLMGANIANEVAAEKFCETTIGSKVMENGLLFKELLQTPNFRITVVDDADTVELCGALKNIVAVGAGFCDGLRCGDNTKAAVIRLGLMEMIAFARIFCKGQVSTATFLESCGVADLITTCYGGRNRRVAEAFARTGKTIEELEKEMLNGQKLQGPQTSAEVYRILKQKGLLDKFPLFTAVYQICYESRPVQGMLSCLQSHPEHT.

12-17 (GSGNWG) is a binding site for NAD(+). Lys-122 contacts substrate. An NAD(+)-binding site is contributed by Ala-155. Lys-206 (proton acceptor) is an active-site residue. The NAD(+) site is built by Arg-271, Lys-298, and Gln-300. 271–272 (RN) contacts substrate.

The protein belongs to the NAD-dependent glycerol-3-phosphate dehydrogenase family. As to quaternary structure, interacts with SCN5A.

It is found in the cytoplasm. It carries out the reaction sn-glycerol 3-phosphate + NAD(+) = dihydroxyacetone phosphate + NADH + H(+). In terms of biological role, plays a role in regulating cardiac sodium current; decreased enzymatic activity with resulting increased levels of glycerol 3-phosphate activating the DPD1L-dependent SCN5A phosphorylation pathway, may ultimately lead to decreased sodium current; cardiac sodium current may also be reduced due to alterations of NAD(H) balance induced by DPD1L. The protein is Glycerol-3-phosphate dehydrogenase 1-like protein (GPD1L) of Pongo abelii (Sumatran orangutan).